A 125-amino-acid chain; its full sequence is 14 kDa phosphohistidine phosphatase (125 aa).

A2 carries the N-acetylalanine modification. K21 serves as a coordination point for substrate. Catalysis depends on H53, which acts as the Proton acceptor. 94-96 contributes to the substrate binding site; that stretch reads SMA.

It belongs to the janus family. In terms of assembly, monomer. In terms of tissue distribution, expressed abundantly in heart and skeletal muscle.

The protein resides in the cytoplasm. The enzyme catalyses N(pros)-phospho-L-histidyl-[protein] + H2O = L-histidyl-[protein] + phosphate. The catalysed reaction is N(tele)-phospho-L-histidyl-[protein] + H2O = L-histidyl-[protein] + phosphate. Its function is as follows. Exhibits phosphohistidine phosphatase activity. The polypeptide is 14 kDa phosphohistidine phosphatase (PHPT1) (Homo sapiens (Human)).